The following is a 642-amino-acid chain: Chaperone protein DnaK (642 aa).

At T196 the chain carries Phosphothreonine; by autocatalysis. The span at 593-603 (STMYQTPSGDT) shows a compositional bias: polar residues. Residues 593–642 (STMYQTPSGDTPPSEPETGASEESKGGDKTQGDGEVDAEYEVIDGNDKDK) form a disordered region. Residues 614-624 (EESKGGDKTQG) are compositionally biased toward basic and acidic residues. Over residues 626–636 (GEVDAEYEVID) the composition is skewed to acidic residues.

It belongs to the heat shock protein 70 family.

Its function is as follows. Acts as a chaperone. In Chlorobium phaeobacteroides (strain BS1), this protein is Chaperone protein DnaK.